Reading from the N-terminus, the 278-residue chain is Small ribosomal subunit protein uS5 (278 aa).

The interval 1-43 (MADAPAPAGGRGGFRGGFGGRGRGRGRGRGRGRGRGRGAKDGD) is disordered. Over residues 9-21 (GGRGGFRGGFGGR) the composition is skewed to gly residues. A compositionally biased stretch (basic residues) spans 22–37 (GRGRGRGRGRGRGRGR). The S5 DRBM domain maps to 88 to 151 (LKDEVLKIMP…ILAKLSVVPV (64 aa)).

It belongs to the universal ribosomal protein uS5 family.

Functionally, component of the ribosome, a large ribonucleoprotein complex responsible for the synthesis of proteins in the cell. The small ribosomal subunit (SSU) binds messenger RNAs (mRNAs) and translates the encoded message by selecting cognate aminoacyl-transfer RNA (tRNA) molecules. The large subunit (LSU) contains the ribosomal catalytic site termed the peptidyl transferase center (PTC), which catalyzes the formation of peptide bonds, thereby polymerizing the amino acids delivered by tRNAs into a polypeptide chain. The nascent polypeptides leave the ribosome through a tunnel in the LSU and interact with protein factors that function in enzymatic processing, targeting, and the membrane insertion of nascent chains at the exit of the ribosomal tunnel. Plays a role in the assembly and function of the 40S ribosomal subunit. Mutations in this protein affects the control of translational fidelity. Involved in nucleolar processing of pre-18S ribosomal RNA and ribosome assembly. The protein is Small ribosomal subunit protein uS5 (RPS2) of Urechis caupo (Innkeeper worm).